The sequence spans 274 residues: Cytochrome c oxidase subunit 3 (274 aa).

At 1-15 (MTHQTHAYHMVNPSP) the chain is on the mitochondrial matrix side. The chain crosses the membrane as a helical span at residues 16-34 (WPLTGALSALLMTSGLAMW). Residues 35-40 (FHFNSS) lie on the Mitochondrial intermembrane side of the membrane. A helical membrane pass occupies residues 41 to 66 (MLLSLGMLTNLLTMYQWWRDIVREGT). The Mitochondrial matrix segment spans residues 67-72 (FQGHHT). The helical transmembrane segment at 73-105 (SIVQKGLRYGMVLFIISEIFFFAGFFWAFYHSS) threads the bilayer. Residues 106-128 (LAPTPELGGCWPPTGIHPLNPLE) lie on the Mitochondrial intermembrane side of the membrane. The chain crosses the membrane as a helical span at residues 129–152 (VPLLNTAVLLASGVSITWAHHSLM). Topologically, residues 153-155 (EGN) are mitochondrial matrix. Residues 156-183 (RVQMLQALLITITLGLYFTLLQASEYFE) form a helical membrane-spanning segment. Residues 184 to 190 (TSFTISD) lie on the Mitochondrial intermembrane side of the membrane. The helical transmembrane segment at 191–223 (GVYGSTFFMATGFHGLHVIIGSTFLTVCFFRQL) threads the bilayer. Residues 224 to 232 (SFHFTSNHH) are Mitochondrial matrix-facing. Residues 233–256 (FGFEAAAWYWHFVDVVWLFLYVSI) form a helical membrane-spanning segment. Residues 257 to 274 (YWWGSYSFSIDPMQLTSN) lie on the Mitochondrial intermembrane side of the membrane.

This sequence belongs to the cytochrome c oxidase subunit 3 family. Component of the cytochrome c oxidase (complex IV, CIV), a multisubunit enzyme composed of 14 subunits. The complex is composed of a catalytic core of 3 subunits MT-CO1, MT-CO2 and MT-CO3, encoded in the mitochondrial DNA, and 11 supernumerary subunits COX4I, COX5A, COX5B, COX6A, COX6B, COX6C, COX7A, COX7B, COX7C, COX8 and NDUFA4, which are encoded in the nuclear genome. The complex exists as a monomer or a dimer and forms supercomplexes (SCs) in the inner mitochondrial membrane with NADH-ubiquinone oxidoreductase (complex I, CI) and ubiquinol-cytochrome c oxidoreductase (cytochrome b-c1 complex, complex III, CIII), resulting in different assemblies (supercomplex SCI(1)III(2)IV(1) and megacomplex MCI(2)III(2)IV(2)).

Its subcellular location is the mitochondrion inner membrane. The catalysed reaction is 4 Fe(II)-[cytochrome c] + O2 + 8 H(+)(in) = 4 Fe(III)-[cytochrome c] + 2 H2O + 4 H(+)(out). Component of the cytochrome c oxidase, the last enzyme in the mitochondrial electron transport chain which drives oxidative phosphorylation. The respiratory chain contains 3 multisubunit complexes succinate dehydrogenase (complex II, CII), ubiquinol-cytochrome c oxidoreductase (cytochrome b-c1 complex, complex III, CIII) and cytochrome c oxidase (complex IV, CIV), that cooperate to transfer electrons derived from NADH and succinate to molecular oxygen, creating an electrochemical gradient over the inner membrane that drives transmembrane transport and the ATP synthase. Cytochrome c oxidase is the component of the respiratory chain that catalyzes the reduction of oxygen to water. Electrons originating from reduced cytochrome c in the intermembrane space (IMS) are transferred via the dinuclear copper A center (CU(A)) of subunit 2 and heme A of subunit 1 to the active site in subunit 1, a binuclear center (BNC) formed by heme A3 and copper B (CU(B)). The BNC reduces molecular oxygen to 2 water molecules using 4 electrons from cytochrome c in the IMS and 4 protons from the mitochondrial matrix. This chain is Cytochrome c oxidase subunit 3 (MT-CO3), found in Lemur catta (Ring-tailed lemur).